The sequence spans 324 residues: Cytosolic sulfotransferase 13 (324 aa).

A 3'-phosphoadenylyl sulfate-binding site is contributed by 76–81 (KSGTTW). His-134 functions as the Proton acceptor in the catalytic mechanism. 3'-phosphoadenylyl sulfate-binding positions include Arg-156, Ser-164, Tyr-222, and 288-290 (RKG).

Belongs to the sulfotransferase 1 family.

It is found in the cytoplasm. Functionally, sulfotransferase that utilizes 3'-phospho-5'-adenylyl sulfate (PAPS) as sulfonate donor. The protein is Cytosolic sulfotransferase 13 (SOT13) of Arabidopsis thaliana (Mouse-ear cress).